The following is a 47-amino-acid chain: Protein DVU_0533 (47 aa).

Residues 18-37 (WTYILMGVTLLVYVGYWLFL) traverse the membrane as a helical segment.

The protein localises to the cell membrane. Its function is as follows. HMWC (high-molecular-weight cytochrome c), ORF2, ORF3, ORF4, ORF5 and ORF6 in the HMC operon form a transmembrane protein complex that allows electron flow from the periplasmic hydrogenase to the cytoplasmic enzymes that catalyze reduction of sulfates. In Nitratidesulfovibrio vulgaris (strain ATCC 29579 / DSM 644 / CCUG 34227 / NCIMB 8303 / VKM B-1760 / Hildenborough) (Desulfovibrio vulgaris), this protein is Protein DVU_0533.